A 412-amino-acid polypeptide reads, in one-letter code: Argininosuccinate synthase (412 aa).

Residues 15–23 (AYSGGLDTS) and alanine 42 contribute to the ATP site. The L-citrulline site is built by tyrosine 93 and serine 98. An ATP-binding site is contributed by glycine 123. Positions 125, 129, and 130 each coordinate L-aspartate. Residue asparagine 129 coordinates L-citrulline. The L-citrulline site is built by arginine 133, serine 185, serine 194, glutamate 270, and tyrosine 282.

It belongs to the argininosuccinate synthase family. Type 1 subfamily. Homotetramer.

The protein resides in the cytoplasm. It catalyses the reaction L-citrulline + L-aspartate + ATP = 2-(N(omega)-L-arginino)succinate + AMP + diphosphate + H(+). The protein operates within amino-acid biosynthesis; L-arginine biosynthesis; L-arginine from L-ornithine and carbamoyl phosphate: step 2/3. In Psychrobacter cryohalolentis (strain ATCC BAA-1226 / DSM 17306 / VKM B-2378 / K5), this protein is Argininosuccinate synthase.